A 364-amino-acid chain; its full sequence is tRNA 2-selenouridine synthase (364 aa).

One can recognise a Rhodanese domain in the interval 14–137; sequence LIADTPIIDV…LRQTAIQATI (124 aa). Catalysis depends on Cys97, which acts as the S-selanylcysteine intermediate.

This sequence belongs to the SelU family. As to quaternary structure, monomer.

The catalysed reaction is 5-methylaminomethyl-2-thiouridine(34) in tRNA + selenophosphate + (2E)-geranyl diphosphate + H2O + H(+) = 5-methylaminomethyl-2-selenouridine(34) in tRNA + (2E)-thiogeraniol + phosphate + diphosphate. It catalyses the reaction 5-methylaminomethyl-2-thiouridine(34) in tRNA + (2E)-geranyl diphosphate = 5-methylaminomethyl-S-(2E)-geranyl-thiouridine(34) in tRNA + diphosphate. The enzyme catalyses 5-methylaminomethyl-S-(2E)-geranyl-thiouridine(34) in tRNA + selenophosphate + H(+) = 5-methylaminomethyl-2-(Se-phospho)selenouridine(34) in tRNA + (2E)-thiogeraniol. It carries out the reaction 5-methylaminomethyl-2-(Se-phospho)selenouridine(34) in tRNA + H2O = 5-methylaminomethyl-2-selenouridine(34) in tRNA + phosphate. Functionally, involved in the post-transcriptional modification of the uridine at the wobble position (U34) of tRNA(Lys), tRNA(Glu) and tRNA(Gln). Catalyzes the conversion of 2-thiouridine (S2U-RNA) to 2-selenouridine (Se2U-RNA). Acts in a two-step process involving geranylation of 2-thiouridine (S2U) to S-geranyl-2-thiouridine (geS2U) and subsequent selenation of the latter derivative to 2-selenouridine (Se2U) in the tRNA chain. The protein is tRNA 2-selenouridine synthase of Escherichia coli (strain ATCC 8739 / DSM 1576 / NBRC 3972 / NCIMB 8545 / WDCM 00012 / Crooks).